Consider the following 173-residue polypeptide: Alpha-crystallin A chain (173 aa).

Residue M1 is modified to N-acetylmethionine. Positions 53–164 (NFLDSSNSGM…GDRSIPVTRD (112 aa)) constitute a sHSP domain. Zn(2+)-binding residues include H101, E103, and H108. Residues C132 and C143 are joined by a disulfide bond. Positions 143–173 (CGPKSGGSESGRGDRSIPVTRDDKTNSTPSS) are disordered. Over residues 153–167 (GRGDRSIPVTRDDKT) the composition is skewed to basic and acidic residues.

It belongs to the small heat shock protein (HSP20) family. In terms of assembly, heteropolymer composed of three CRYAA and one CRYAB subunits. Inter-subunit bridging via zinc ions enhances stability, which is crucial as there is no protein turn over in the lens. Zinc coordination is achieved at least by His-101, Glu-103 and His-108. His-101 and Glu-103 come from the same molecule within the oligomer, while His-108 residue is provided by another molecule. Can also form homodimers and homotetramers (dimers of dimers) which serve as the building blocks of homooligomers. Part of a complex required for lens intermediate filament formation composed of BFSP1, BFSP2 and CRYAA.

The protein localises to the cytoplasm. It is found in the nucleus. Functionally, contributes to the transparency and refractive index of the lens. May act as a chaperone, preventing aggregation of various proteins under a wide range of stress conditions. In Psalidodon fasciatus (Banded astyanax), this protein is Alpha-crystallin A chain (cryaa).